Reading from the N-terminus, the 418-residue chain is UDP-N-acetylglucosamine 1-carboxyvinyltransferase 1 (418 aa).

Phosphoenolpyruvate is bound at residue 22-23; it reads KN. R94 is a UDP-N-acetyl-alpha-D-glucosamine binding site. C118 functions as the Proton donor in the catalytic mechanism. 2-(S-cysteinyl)pyruvic acid O-phosphothioketal is present on C118. Residues 123 to 127, D306, and I328 each bind UDP-N-acetyl-alpha-D-glucosamine; that span reads RPIDL.

Belongs to the EPSP synthase family. MurA subfamily.

It is found in the cytoplasm. The catalysed reaction is phosphoenolpyruvate + UDP-N-acetyl-alpha-D-glucosamine = UDP-N-acetyl-3-O-(1-carboxyvinyl)-alpha-D-glucosamine + phosphate. Its pathway is cell wall biogenesis; peptidoglycan biosynthesis. In terms of biological role, cell wall formation. Adds enolpyruvyl to UDP-N-acetylglucosamine. The polypeptide is UDP-N-acetylglucosamine 1-carboxyvinyltransferase 1 (Clostridium acetobutylicum (strain ATCC 824 / DSM 792 / JCM 1419 / IAM 19013 / LMG 5710 / NBRC 13948 / NRRL B-527 / VKM B-1787 / 2291 / W)).